Reading from the N-terminus, the 93-residue chain is Small ribosomal subunit protein uS19 (93 aa).

Belongs to the universal ribosomal protein uS19 family.

Functionally, protein S19 forms a complex with S13 that binds strongly to the 16S ribosomal RNA. This is Small ribosomal subunit protein uS19 from Symbiobacterium thermophilum (strain DSM 24528 / JCM 14929 / IAM 14863 / T).